The chain runs to 681 residues: Anaphase-promoting complex subunit 2 (681 aa).

It belongs to the cullin family. In terms of assembly, the APC/C is composed of at least 13 subunits: apc1, apc2, nuc2, apc4, apc5, cut9, apc8, apc10, apc11, hcn1, apc13, apc14 and apc15.

Functionally, component of the anaphase-promoting complex/cyclosome (APC/C), a cell cycle-regulated E3 ubiquitin-protein ligase complex that controls progression through mitosis and the G1 phase of the cell cycle. The APC/C is thought to confer substrate specificity and, in the presence of ubiquitin-conjugating E2 enzymes, it catalyzes the formation of protein-ubiquitin conjugates that are subsequently degraded by the 26S proteasome. In Schizosaccharomyces pombe (strain 972 / ATCC 24843) (Fission yeast), this protein is Anaphase-promoting complex subunit 2 (apc2).